The primary structure comprises 278 residues: Energy-coupling factor transporter ATP-binding protein EcfA (278 aa).

Residues 5-240 form the ABC transporter domain; the sequence is LETKNLVYNY…KEVIDEADLR (236 aa). Residue 38 to 45 participates in ATP binding; the sequence is GHNGAGKS.

Belongs to the ABC transporter superfamily. Energy-coupling factor EcfA family. In terms of assembly, forms a stable energy-coupling factor (ECF) transporter complex composed of 2 membrane-embedded substrate-binding proteins (S component), 2 ATP-binding proteins (A component) and 2 transmembrane proteins (T component).

It is found in the cell membrane. Functionally, ATP-binding (A) component of a common energy-coupling factor (ECF) ABC-transporter complex. Unlike classic ABC transporters this ECF transporter provides the energy necessary to transport a number of different substrates. The chain is Energy-coupling factor transporter ATP-binding protein EcfA from Methanosphaera stadtmanae (strain ATCC 43021 / DSM 3091 / JCM 11832 / MCB-3).